Consider the following 234-residue polypeptide: Iron-sulfur cluster co-chaperone protein HscB (234 aa).

Residues Cys40, Cys43, Cys57, and Cys60 each coordinate a divalent metal cation. Residues 71-143 (DYFSLMNCNR…LTRGLYLLKL (73 aa)) enclose the J domain.

The protein belongs to the HscB family. Interacts with ISCU and HSPA9 to form an iron-sulfur transfer complex. Interacts with SDHAF1 (via the first LYR motif); the interaction recruits the iron-sulfur transfer complex composed of HSC20, HSPA9 and ISCU and mediates the incorporation of iron-sulfur clusters into SDHB which also interacts with HSC20. Interacts with the cytoplasmic form of ISCU and with CIA complex member CIAO1 (via LYR motif). As to quaternary structure, homodimer. Interacts with ISCU (cytoplasmic form); this interaction stabilizes the (Fe-S) clusters on ISCU. Interacts with the CIA complex member CIAO1 (via LYR motif).

The protein resides in the cytoplasm. Its subcellular location is the mitochondrion. The protein operates within cofactor biosynthesis; iron-sulfur cluster biosynthesis. Acts as a co-chaperone in iron-sulfur cluster assembly in mitochondria. Required for incorporation of iron-sulfur clusters into SDHB, the iron-sulfur protein subunit of succinate dehydrogenase that is involved in complex II of the mitochondrial electron transport chain. Recruited to SDHB by interaction with SDHAF1 which first binds SDHB and then recruits the iron-sulfur transfer complex formed by HSC20, HSPA9 and ISCU through direct binding to HSC20. Plays an essential role in hematopoiesis. In terms of biological role, acts as a co-chaperone in iron-sulfur cluster assembly in the cytoplasm. Also mediates complex formation between components of the cytosolic iron-sulfur biogenesis pathway and the CIA targeting complex composed of CIAO1, DIPK1B/FAM69B and MMS19 by binding directly to the scaffold protein ISCU and to CIAO1. This facilitates iron-sulfur cluster insertion into a number of cytoplasmic and nuclear proteins including POLD1, ELP3, DPYD and PPAT. The protein is Iron-sulfur cluster co-chaperone protein HscB of Mus musculus (Mouse).